The primary structure comprises 238 residues: Flagellar L-ring protein (238 aa).

The first 16 residues, 1–16, serve as a signal peptide directing secretion; it reads MRKLILISLCIFFLAS. C17 carries N-palmitoyl cysteine lipidation. C17 is lipidated: S-diacylglycerol cysteine.

Belongs to the FlgH family. The basal body constitutes a major portion of the flagellar organelle and consists of four rings (L,P,S, and M) mounted on a central rod.

The protein localises to the cell outer membrane. Its subcellular location is the bacterial flagellum basal body. In terms of biological role, assembles around the rod to form the L-ring and probably protects the motor/basal body from shearing forces during rotation. The polypeptide is Flagellar L-ring protein (Thermodesulfovibrio yellowstonii (strain ATCC 51303 / DSM 11347 / YP87)).